The primary structure comprises 394 residues: tRNA-specific 2-thiouridylase MnmA (394 aa).

ATP-binding positions include 13–20 (GLSGGVDS) and Met-39. An interaction with target base in tRNA region spans residues 99–101 (NPD). Cys-104 functions as the Nucleophile in the catalytic mechanism. A disulfide bridge links Cys-104 with Cys-202. Gly-128 is a binding site for ATP. The interval 152 to 154 (KDQ) is interaction with tRNA. Cys-202 acts as the Cysteine persulfide intermediate in catalysis. The segment at 329-330 (RY) is interaction with tRNA.

This sequence belongs to the MnmA/TRMU family.

Its subcellular location is the cytoplasm. The catalysed reaction is S-sulfanyl-L-cysteinyl-[protein] + uridine(34) in tRNA + AH2 + ATP = 2-thiouridine(34) in tRNA + L-cysteinyl-[protein] + A + AMP + diphosphate + H(+). Functionally, catalyzes the 2-thiolation of uridine at the wobble position (U34) of tRNA, leading to the formation of s(2)U34. In Polaromonas naphthalenivorans (strain CJ2), this protein is tRNA-specific 2-thiouridylase MnmA.